The chain runs to 628 residues: ATP-dependent RNA helicase mrh4, mitochondrial (628 aa).

The N-terminal 40 residues, 1–40 (MSLAVRPPVCLLCRSGAPTLLPSSVSQVARSMATARLRRK), are a transit peptide targeting the mitochondrion. The segment at 51–109 (AKSSINQKRSGKAKFGPWSGMNQTEAHIRGEPRSRSQAALRRSGEKAADTPRKSDSPLY) is disordered. Residues 92–105 (RSGEKAADTPRKSD) show a composition bias toward basic and acidic residues. The Q motif signature appears at 137–170 (TSFDHFPLLPVVRHSIFSQALPGLVDVTPTPIQR). One can recognise a Helicase ATP-binding domain in the interval 190–402 (EDGDPQYDQY…RKRYPDIKRL (213 aa)). 203 to 210 (AETGSGKT) is an ATP binding site. Residues 228 to 253 (DKENERKEEERKAKEKEERLKNRAFD) are compositionally biased toward basic and acidic residues. The tract at residues 228 to 260 (DKENERKEEERKAKEKEERLKNRAFDLEPEEPP) is disordered. Positions 349 to 352 (DEAD) match the DEAD box motif. The Helicase C-terminal domain maps to 456 to 628 (YVGPNIKKIL…EGMFRGQALI (173 aa)).

The protein belongs to the DEAD box helicase family. MRH4 subfamily.

Its subcellular location is the mitochondrion. It carries out the reaction ATP + H2O = ADP + phosphate + H(+). ATP-binding RNA helicase involved in mitochondrial RNA metabolism. Required for maintenance of mitochondrial DNA. The chain is ATP-dependent RNA helicase mrh4, mitochondrial (mrh4) from Aspergillus oryzae (strain ATCC 42149 / RIB 40) (Yellow koji mold).